The primary structure comprises 384 residues: Probable endopolygalacturonase C (384 aa).

An N-terminal signal peptide occupies residues 1-19 (MVRQLALACGLLAAVAVQA). Positions 20 to 40 (APAEPAHPMVTEAPDASLLHK) are excised as a propeptide. Cys-45 and Cys-63 form a disulfide bridge. PbH1 repeat units lie at residues 176–207 (ATDLTLTDITIDNTDGDTDDLAANTDGFDIGE) and 208–229 (STDITITGAKVYNQDDCVAINS). Asp-222 (proton donor) is an active-site residue. Residues Cys-224 and Cys-240 are joined by a disulfide bond. The active site involves His-244. PbH1 repeat units lie at residues 254–280 (RDDNTVKNVTFYDVNVLKSQQAIRIKA) and 288–310 (ISDITYHEIAFSDATDYGIVIEQ). Asn-261 carries N-linked (GlcNAc...) asparagine glycosylation. Cystine bridges form between Cys-349/Cys-354 and Cys-373/Cys-382.

It belongs to the glycosyl hydrolase 28 family.

It localises to the secreted. The catalysed reaction is (1,4-alpha-D-galacturonosyl)n+m + H2O = (1,4-alpha-D-galacturonosyl)n + (1,4-alpha-D-galacturonosyl)m.. Its function is as follows. Involved in maceration and soft-rotting of plant tissue. Hydrolyzes the 1,4-alpha glycosidic bonds of de-esterified pectate in the smooth region of the plant cell wall. This chain is Probable endopolygalacturonase C (pgaC), found in Aspergillus aculeatus.